The primary structure comprises 729 residues: Carbon monoxide dehydrogenase/acetyl-CoA synthase subunit alpha (729 aa).

The [4Fe-4S] cluster site is built by Cys-506, Cys-509, Cys-518, and Cys-528. Residue Cys-509 coordinates Ni(2+). Positions 595, 596, and 597 each coordinate Ni(2+).

As to quaternary structure, tetramer of two alpha and two beta chains. The cofactor is Ni cation. [4Fe-4S] cluster serves as cofactor.

It catalyses the reaction Co(I)-[corrinoid Fe-S protein] + acetyl-CoA + H(+) = methyl-Co(III)-[corrinoid Fe-S protein] + CO + CoA. Functionally, the beta subunit generates CO from CO(2), while the alpha subunit (this protein) combines the CO with CoA and a methyl group to form acetyl-CoA. The methyl group, which is incorporated into acetyl-CoA, is transferred to the alpha subunit by a corrinoid iron-sulfur protein. The chain is Carbon monoxide dehydrogenase/acetyl-CoA synthase subunit alpha from Moorella thermoacetica (Clostridium thermoaceticum).